Consider the following 432-residue polypeptide: Alpha-galactosidase (432 aa).

2–68 contacts NAD(+); it reads KKITFIGAGS…PSVAINSYDD (67 aa). Position 148 (N148) interacts with substrate. Residue C169 participates in Mn(2+) binding. H170 acts as the Proton donor in catalysis. Mn(2+) is bound at residue H199.

This sequence belongs to the glycosyl hydrolase 4 family. Homodimer. It depends on Mn(2+) as a cofactor. The cofactor is NAD(+).

It is found in the cytoplasm. It catalyses the reaction Hydrolysis of terminal, non-reducing alpha-D-galactose residues in alpha-D-galactosides, including galactose oligosaccharides, galactomannans and galactolipids.. In terms of biological role, catalyzes the hydrolysis of melibiose and alpha-galactosides of the raffinose family of oligosaccharides (RFOs) such as raffinose and stachyose. Cannot act on polymeric substrates such as locust bean gum. The protein is Alpha-galactosidase of Bacillus subtilis (strain 168).